The primary structure comprises 172 residues: Large ribosomal subunit protein uL10 (172 aa).

Belongs to the universal ribosomal protein uL10 family. Part of the ribosomal stalk of the 50S ribosomal subunit. The N-terminus interacts with L11 and the large rRNA to form the base of the stalk. The C-terminus forms an elongated spine to which L12 dimers bind in a sequential fashion forming a multimeric L10(L12)X complex.

In terms of biological role, forms part of the ribosomal stalk, playing a central role in the interaction of the ribosome with GTP-bound translation factors. In Caulobacter vibrioides (strain ATCC 19089 / CIP 103742 / CB 15) (Caulobacter crescentus), this protein is Large ribosomal subunit protein uL10 (rplJ).